Here is a 363-residue protein sequence, read N- to C-terminus: Alanine racemase (363 aa).

The active-site Proton acceptor; specific for D-alanine is Lys-35. The residue at position 35 (Lys-35) is an N6-(pyridoxal phosphate)lysine. Arg-134 contributes to the substrate binding site. Catalysis depends on Tyr-259, which acts as the Proton acceptor; specific for L-alanine. Met-307 contacts substrate.

The protein belongs to the alanine racemase family. Requires pyridoxal 5'-phosphate as cofactor.

It carries out the reaction L-alanine = D-alanine. Its pathway is amino-acid biosynthesis; D-alanine biosynthesis; D-alanine from L-alanine: step 1/1. Functionally, catalyzes the interconversion of L-alanine and D-alanine. May also act on other amino acids. This Shewanella denitrificans (strain OS217 / ATCC BAA-1090 / DSM 15013) protein is Alanine racemase (alr).